The sequence spans 553 residues: Syntaxin-binding protein 4 (553 aa).

Phosphoserine occurs at positions 10, 12, 99, and 212. One can recognise a PDZ domain in the interval 19–105 (AFQMITIAKE…RLESAWEIAF (87 aa)). Positions 291-417 (SSEADEMERL…VLDCQLRKSE (127 aa)) form a coiled coil. Ser-463 bears the Phosphoserine mark. Positions 496 to 529 (DCLPYGWEEAYTADGIKYFINHVTQTTSWIHPVM) constitute a WW domain.

As to quaternary structure, interacts with STX4A. In terms of processing, phosphorylated on Ser-99 by PKB/AKT2 after insulin treatment. Phosphorylation on Ser-99 abolishes the interaction with STX4A.

It localises to the cytoplasm. Functionally, plays a role in the translocation of transport vesicles from the cytoplasm to the plasma membrane. Inhibits the translocation of SLC2A4 from intracellular vesicles to the plasma membrane by STX4A binding and preventing the interaction between STX4A and VAMP2. Stimulation with insulin disrupts the interaction with STX4A, leading to increased levels of SLC2A4 at the plasma membrane. May also play a role in the regulation of insulin release by pancreatic beta cells after stimulation by glucose. The protein is Syntaxin-binding protein 4 (STXBP4) of Homo sapiens (Human).